We begin with the raw amino-acid sequence, 271 residues long: Putative pyruvate, phosphate dikinase regulatory protein (271 aa).

150–157 (GVSRTSKT) is an ADP binding site.

Belongs to the pyruvate, phosphate/water dikinase regulatory protein family. PDRP subfamily.

The catalysed reaction is N(tele)-phospho-L-histidyl/L-threonyl-[pyruvate, phosphate dikinase] + ADP = N(tele)-phospho-L-histidyl/O-phospho-L-threonyl-[pyruvate, phosphate dikinase] + AMP + H(+). It catalyses the reaction N(tele)-phospho-L-histidyl/O-phospho-L-threonyl-[pyruvate, phosphate dikinase] + phosphate + H(+) = N(tele)-phospho-L-histidyl/L-threonyl-[pyruvate, phosphate dikinase] + diphosphate. Bifunctional serine/threonine kinase and phosphorylase involved in the regulation of the pyruvate, phosphate dikinase (PPDK) by catalyzing its phosphorylation/dephosphorylation. The polypeptide is Putative pyruvate, phosphate dikinase regulatory protein (Oceanobacillus iheyensis (strain DSM 14371 / CIP 107618 / JCM 11309 / KCTC 3954 / HTE831)).